A 162-amino-acid chain; its full sequence is Ribosomal RNA large subunit methyltransferase H (162 aa).

Residues Leu78, Gly109, and 128–133 (LSPLTL) contribute to the S-adenosyl-L-methionine site.

This sequence belongs to the RNA methyltransferase RlmH family. In terms of assembly, homodimer.

It localises to the cytoplasm. It catalyses the reaction pseudouridine(1915) in 23S rRNA + S-adenosyl-L-methionine = N(3)-methylpseudouridine(1915) in 23S rRNA + S-adenosyl-L-homocysteine + H(+). Functionally, specifically methylates the pseudouridine at position 1915 (m3Psi1915) in 23S rRNA. This is Ribosomal RNA large subunit methyltransferase H from Psychrobacter sp. (strain PRwf-1).